Reading from the N-terminus, the 143-residue chain is Cell division protein SepF (143 aa).

The protein belongs to the SepF family. In terms of assembly, homodimer. Interacts with FtsZ.

The protein resides in the cytoplasm. Functionally, cell division protein that is part of the divisome complex and is recruited early to the Z-ring. Probably stimulates Z-ring formation, perhaps through the cross-linking of FtsZ protofilaments. Its function overlaps with FtsA. This chain is Cell division protein SepF, found in Geobacillus thermodenitrificans (strain NG80-2).